A 175-amino-acid polypeptide reads, in one-letter code: uncharacterized protein (175 aa).

The next 5 membrane-spanning stretches (helical) occupy residues 25–45 (MIAIGGTIGTGLFLGAGTTIS), 46–66 (ATGPSVIFIYAIMGLFFFFLL), 97–117 (FAGWTYWIGILFACMAELTAV), 124–144 (WLPGLPAWLIEVSVLGLLTLL), and 155–175 (TEFWFAMIKIIAIISLVVTGI).

It belongs to the amino acid-polyamine-organocation (APC) superfamily.

Its subcellular location is the cell membrane. This is an uncharacterized protein from Lactobacillus delbrueckii subsp. lactis.